Reading from the N-terminus, the 382-residue chain is Cholinephosphotransferase 1 (382 aa).

The Cytoplasmic segment spans residues 1 to 51; sequence MPQCECPEPLSAVQLKRLEEHKYSAAGRSLFEPPCQIYWNWLVQQIPTWVA. Residues 52-72 form a helical membrane-spanning segment; the sequence is PNTLTTIGLVINVITTVILVY. N53 serves as a coordination point for CDP-choline. At 73–82 the chain is on the lumenal side; the sequence is YSPTATEEVP. A helical transmembrane segment spans residues 83 to 107; sequence GWAFFLSALGLFIYQSLDAIDGKQA. Residues D100 and D103 each coordinate Mg(2+). R108 lines the CDP-choline pocket. The Cytoplasmic segment spans residues 108 to 114; sequence RRTNSSS. Residues 115–139 form a helical membrane-spanning segment; that stretch reads ALGELFDHGCDAVSTVFVAVGTCIC. Position 121 (D121) interacts with Mg(2+). H122 acts as the Proton acceptor in catalysis. Residue D125 participates in Mg(2+) binding. Topologically, residues 140–149 are lumenal; sequence CGIGAYPNWM. Residues 150-168 form a helical membrane-spanning segment; sequence FFCGFVGMFMFFCAHWQTY. At 169–179 the chain is on the cytoplasmic side; that stretch reads VSGTLRFGLVD. A helical membrane pass occupies residues 180–196; sequence VTEVQIAIIIMYLLTAF. Topologically, residues 197-211 are lumenal; that stretch reads TGVSFWEMRVPVLGV. The chain crosses the membrane as a helical span at residues 212–237; the sequence is NLQTFPILGIIGGFLYSTYNYFFVIM. Residues 238–254 lie on the Cytoplasmic side of the membrane; the sequence is NGGVGKNGSTVADTSVL. Residues 255–270 traverse the membrane as a helical segment; it reads TPGLHIGLILTLAFII. Topologically, residues 271–282 are lumenal; the sequence is FKKSSSHLFEHH. The chain crosses the membrane as a helical span at residues 283 to 305; that stretch reads PCLYVLTFGMVIAKISNKLVVAH. The Cytoplasmic segment spans residues 306–318; the sequence is MTKSELHLQDTAF. The chain crosses the membrane as a helical span at residues 319–328; that stretch reads IGPGLLFLNQ. Residues 329 to 335 are Lumenal-facing; it reads YFNSYID. A helical membrane pass occupies residues 336-365; sequence EHIVLWIAMVLSLVDLVRYCTAVCLQIASH. Topologically, residues 366–382 are cytoplasmic; sequence LRIRVFSISPQGHAHKD.

This sequence belongs to the CDP-alcohol phosphatidyltransferase class-I family. Mg(2+) serves as cofactor. Requires Mn(2+) as cofactor.

Its subcellular location is the golgi apparatus membrane. The catalysed reaction is CDP-choline + a 1,2-diacyl-sn-glycerol = a 1,2-diacyl-sn-glycero-3-phosphocholine + CMP + H(+). It carries out the reaction 1-octadecanoyl-2-(5Z,8Z,11Z,14Z-eicosatetraenoyl)-sn-glycerol + CDP-choline = 1-octadecanoyl-2-(5Z,8Z,11Z,14Z-eicosatetraenoyl)-sn-glycero-3-phosphocholine + CMP + H(+). It catalyses the reaction 1-hexadecanoyl-2-(9Z-octadecenoyl)-sn-glycerol + CDP-choline = 1-hexadecanoyl-2-(9Z-octadecenoyl)-sn-glycero-3-phosphocholine + CMP + H(+). The enzyme catalyses 1-hexadecanoyl-2-(4Z,7Z,10Z,13Z,16Z,19Z-docosahexaenoyl)-sn-glycerol + CDP-choline = 1-hexadecanoyl-2-(4Z,7Z,10Z,13Z,16Z,19Z-docosahexaenoyl)-sn-glycero-3-phosphocholine + CMP + H(+). The catalysed reaction is 1,2-dioctanoyl-sn-glycerol + CDP-choline = 1,2-dioctanoyl-sn-glycero-3-phosphocholine + CMP + H(+). It functions in the pathway phospholipid metabolism; phosphatidylcholine biosynthesis; phosphatidylcholine from phosphocholine: step 2/2. Catalyzes the final step of de novo phosphatidylcholine (PC) synthesis, i.e. the transfer of choline phosphate from CDP-choline to the free hydroxyl of a diacylglycerol (DAG), producing a PC. It thereby plays a central role in the formation and maintenance of vesicular membranes. The chain is Cholinephosphotransferase 1 (chpt1) from Danio rerio (Zebrafish).